A 317-amino-acid chain; its full sequence is MNYPDIESPPAIFLMGPTASGKSAMALEIARRFPVEIIGVDSAQVYRFMDIGSAKPDKLILSEIPHHLIDLIDPDENYSAARFREDALSVMREITARGRVPLLVGGTMLYFKVLRQGLAALPPADDSVRRALEQQALDKGWPAMHAVLSQLDPVTAGRIQPNDSQRIQRALEVCYLTGKPMSEMLEQQQNADFPFRVFNIALLPGDRSVLHDRISQRFATMLEAGLIDEVRLIREQFHVNGDMPSMRCVGYRQVCMYLDNEISFARMQETGVFATRQLAKRQLTWLRSMSGLQIFDCLENRLARQIIDLIQAQRLFS.

Residue 16-23 (GPTASGKS) participates in ATP binding. Residue 18–23 (TASGKS) coordinates substrate. 3 interaction with substrate tRNA regions span residues 41-44 (DSAQ), 165-169 (QRIQR), and 247-252 (RCVGYR).

Belongs to the IPP transferase family. As to quaternary structure, monomer. Mg(2+) serves as cofactor.

The catalysed reaction is adenosine(37) in tRNA + dimethylallyl diphosphate = N(6)-dimethylallyladenosine(37) in tRNA + diphosphate. Functionally, catalyzes the transfer of a dimethylallyl group onto the adenine at position 37 in tRNAs that read codons beginning with uridine, leading to the formation of N6-(dimethylallyl)adenosine (i(6)A). The chain is tRNA dimethylallyltransferase from Nitrosomonas europaea (strain ATCC 19718 / CIP 103999 / KCTC 2705 / NBRC 14298).